Here is a 428-residue protein sequence, read N- to C-terminus: Enolase (428 aa).

A (2R)-2-phosphoglycerate-binding site is contributed by glutamine 167. The active-site Proton donor is glutamate 209. Residues aspartate 246, glutamate 288, and aspartate 315 each coordinate Mg(2+). Positions 340, 369, 370, and 391 each coordinate (2R)-2-phosphoglycerate. Lysine 340 functions as the Proton acceptor in the catalytic mechanism.

Belongs to the enolase family. As to quaternary structure, component of the RNA degradosome, a multiprotein complex involved in RNA processing and mRNA degradation. Mg(2+) serves as cofactor.

It is found in the cytoplasm. The protein localises to the secreted. Its subcellular location is the cell surface. The catalysed reaction is (2R)-2-phosphoglycerate = phosphoenolpyruvate + H2O. It functions in the pathway carbohydrate degradation; glycolysis; pyruvate from D-glyceraldehyde 3-phosphate: step 4/5. Functionally, catalyzes the reversible conversion of 2-phosphoglycerate (2-PG) into phosphoenolpyruvate (PEP). It is essential for the degradation of carbohydrates via glycolysis. The chain is Enolase from Pseudomonas savastanoi pv. phaseolicola (strain 1448A / Race 6) (Pseudomonas syringae pv. phaseolicola (strain 1448A / Race 6)).